We begin with the raw amino-acid sequence, 230 residues long: Alpha-S1-casein (230 aa).

A signal peptide spans 1–15 (MKLLILTCLVAVALA). Phosphoserine is present on residues serine 33, serine 83, serine 85, serine 86, serine 87, and serine 88. Residues 60-83 (DELKDTRNEPTEDHIMEDTERKES) are compositionally biased toward basic and acidic residues. Disordered stretches follow at residues 60-103 (DELK…DILK) and 211-230 (TPEG…PQWW). The segment covering 84 to 96 (GSSSSEEVVSSTT) has biased composition (low complexity).

It belongs to the alpha-casein family. In terms of tissue distribution, mammary gland specific. Secreted in milk.

The protein resides in the secreted. Its function is as follows. Important role in the capacity of milk to transport calcium phosphate. The polypeptide is Alpha-S1-casein (CSN1S1) (Camelus dromedarius (Dromedary)).